A 333-amino-acid polypeptide reads, in one-letter code: T-cell surface glycoprotein CD1b-1 (333 aa).

Residues 1 to 18 form the signal peptide; the sequence is MLLLPLLLLAVIVPGGDN. At 19-302 the chain is on the extracellular side; sequence EDVFQGPTSF…LYWGHPTSTG (284 aa). N-linked (GlcNAc...) asparagine glycans are attached at residues N38, N75, N146, and N258. Intrachain disulfides connect C120–C184 and C224–C279. The region spanning 185 to 295 is the Ig-like domain; that stretch reads PRYFLSVLDA…LGDQDIVLYW (111 aa). Residues 303–323 form a helical membrane-spanning segment; it reads LIFVAIIVSSLILLICLALWF. At 324-333 the chain is on the cytoplasmic side; the sequence is WRRWSYLTIL. Positions 329–332 match the Internalization signal motif; the sequence is YLTI.

In terms of assembly, heterodimer with B2M (beta-2-microglobulin). Interacts with saposin C.

The protein resides in the cell membrane. Its subcellular location is the endosome membrane. The protein localises to the lysosome membrane. Functionally, antigen-presenting protein that binds self and non-self lipid and glycolipid antigens and presents them to T-cell receptors on natural killer T-cells. In Ovis aries (Sheep), this protein is T-cell surface glycoprotein CD1b-1.